A 275-amino-acid polypeptide reads, in one-letter code: 2,3,4,5-tetrahydropyridine-2,6-dicarboxylate N-succinyltransferase (275 aa).

2 residues coordinate substrate: R108 and D145.

It belongs to the transferase hexapeptide repeat family. Homotrimer.

Its subcellular location is the cytoplasm. It catalyses the reaction (S)-2,3,4,5-tetrahydrodipicolinate + succinyl-CoA + H2O = (S)-2-succinylamino-6-oxoheptanedioate + CoA. The protein operates within amino-acid biosynthesis; L-lysine biosynthesis via DAP pathway; LL-2,6-diaminopimelate from (S)-tetrahydrodipicolinate (succinylase route): step 1/3. This chain is 2,3,4,5-tetrahydropyridine-2,6-dicarboxylate N-succinyltransferase, found in Ruegeria pomeroyi (strain ATCC 700808 / DSM 15171 / DSS-3) (Silicibacter pomeroyi).